The chain runs to 447 residues: Acidic leucine-rich nuclear phosphoprotein 32-related protein (447 aa).

LRR repeat units lie at residues N49–G70, N71–V90, and S96–A117. The 39-residue stretch at C129–E167 folds into the LRRCT domain. The segment at D155 to R447 is disordered. Composition is skewed to acidic residues over residues E163–G194 and V215–E231. Over residues Q232–R242 the composition is skewed to polar residues. 5 stretches are compositionally biased toward acidic residues: residues V256–V277, E284–D309, G336–G374, P397–P415, and D433–R447.

It belongs to the ANP32 family.

The polypeptide is Acidic leucine-rich nuclear phosphoprotein 32-related protein (Arabidopsis thaliana (Mouse-ear cress)).